The sequence spans 222 residues: uncharacterized protein (222 aa).

This is an uncharacterized protein from Methanocaldococcus jannaschii (strain ATCC 43067 / DSM 2661 / JAL-1 / JCM 10045 / NBRC 100440) (Methanococcus jannaschii).